The chain runs to 950 residues: UvrABC system protein A (950 aa).

42 to 49 (GLSGSGKS) provides a ligand contact to ATP. Residues 262–289 (CPVCSYSLPELEPRLFSFNNPMGSCPTC) form a C4-type zinc finger. ABC transporter domains follow at residues 319-596 (WDKR…EKSV) and 616-945 (VNPG…KYLK). Position 649 to 656 (649 to 656 (GVSGSGKS)) interacts with ATP. Residues 748-774 (CEACQGDGVIKVEMHFLPDVYVPCEVC) form a C4-type zinc finger.

Belongs to the ABC transporter superfamily. UvrA family. As to quaternary structure, forms a heterotetramer with UvrB during the search for lesions.

The protein resides in the cytoplasm. In terms of biological role, the UvrABC repair system catalyzes the recognition and processing of DNA lesions. UvrA is an ATPase and a DNA-binding protein. A damage recognition complex composed of 2 UvrA and 2 UvrB subunits scans DNA for abnormalities. When the presence of a lesion has been verified by UvrB, the UvrA molecules dissociate. This Neisseria gonorrhoeae protein is UvrABC system protein A.